The chain runs to 307 residues: Acetaldehyde dehydrogenase 1 (307 aa).

Catalysis depends on Cys-131, which acts as the Acyl-thioester intermediate. NAD(+)-binding positions include 162 to 170 (SIGPGTRKN) and Asn-273.

This sequence belongs to the acetaldehyde dehydrogenase family.

The enzyme catalyses acetaldehyde + NAD(+) + CoA = acetyl-CoA + NADH + H(+). The polypeptide is Acetaldehyde dehydrogenase 1 (salG) (Metapseudomonas furukawaii (Pseudomonas furukawaii)).